The primary structure comprises 588 residues: Proteasome-associated ATPase (588 aa).

Over residues 1 to 10 (MAAHDDDMNR) the composition is skewed to basic and acidic residues. Residues 1–23 (MAAHDDDMNRGIRPGRGSEDPAG) form a disordered region. Residues 47–94 (RILEERIVELQTNLAGVSAQNERLAGTLREARDQIVALKEEVDRLAQP) are a coiled coil. 276–281 (GCGKTL) is a binding site for ATP. Residues 587–588 (YL) form a docks into pockets in the proteasome alpha-ring region.

It belongs to the AAA ATPase family. Homohexamer. Assembles into a hexameric ring structure that caps the 20S proteasome core. Strongly interacts with the prokaryotic ubiquitin-like protein Pup through a hydrophobic interface; the interacting region of ARC lies in its N-terminal coiled-coil domain. There is one Pup binding site per ARC hexamer ring. Upon ATP-binding, the C-terminus of ARC interacts with the alpha-rings of the proteasome core, possibly by binding to the intersubunit pockets.

Its pathway is protein degradation; proteasomal Pup-dependent pathway. Functionally, ATPase which is responsible for recognizing, binding, unfolding and translocation of pupylated proteins into the bacterial 20S proteasome core particle. May be essential for opening the gate of the 20S proteasome via an interaction with its C-terminus, thereby allowing substrate entry and access to the site of proteolysis. Thus, the C-termini of the proteasomal ATPase may function like a 'key in a lock' to induce gate opening and therefore regulate proteolysis. This is Proteasome-associated ATPase from Streptomyces coelicolor (strain ATCC BAA-471 / A3(2) / M145).